The primary structure comprises 442 residues: GTPase HflX (442 aa).

Positions 186–362 (VLVALAGYTN…ALNRVVLKLP (177 aa)) constitute a Hflx-type G domain. Residues 192 to 199 (GYTNAGKS), 217 to 221 (FTTLD), 238 to 241 (DTVG), 306 to 309 (NKID), and 341 to 343 (SAR) each bind GTP. Residues serine 199 and threonine 219 each coordinate Mg(2+).

It belongs to the TRAFAC class OBG-HflX-like GTPase superfamily. HflX GTPase family. Monomer. Associates with the 50S ribosomal subunit. It depends on Mg(2+) as a cofactor.

Its subcellular location is the cytoplasm. In terms of biological role, GTPase that associates with the 50S ribosomal subunit and may have a role during protein synthesis or ribosome biogenesis. The chain is GTPase HflX from Thermococcus kodakarensis (strain ATCC BAA-918 / JCM 12380 / KOD1) (Pyrococcus kodakaraensis (strain KOD1)).